Reading from the N-terminus, the 149-residue chain is D-aminoacyl-tRNA deacylase (149 aa).

The short motif at 141 to 142 is the Gly-cisPro motif, important for rejection of L-amino acids element; sequence GP.

Belongs to the DTD family. Homodimer.

It localises to the cytoplasm. It carries out the reaction glycyl-tRNA(Ala) + H2O = tRNA(Ala) + glycine + H(+). The catalysed reaction is a D-aminoacyl-tRNA + H2O = a tRNA + a D-alpha-amino acid + H(+). Its function is as follows. An aminoacyl-tRNA editing enzyme that deacylates mischarged D-aminoacyl-tRNAs. Also deacylates mischarged glycyl-tRNA(Ala), protecting cells against glycine mischarging by AlaRS. Acts via tRNA-based rather than protein-based catalysis; rejects L-amino acids rather than detecting D-amino acids in the active site. By recycling D-aminoacyl-tRNA to D-amino acids and free tRNA molecules, this enzyme counteracts the toxicity associated with the formation of D-aminoacyl-tRNA entities in vivo and helps enforce protein L-homochirality. The sequence is that of D-aminoacyl-tRNA deacylase from Streptomyces griseus subsp. griseus (strain JCM 4626 / CBS 651.72 / NBRC 13350 / KCC S-0626 / ISP 5235).